We begin with the raw amino-acid sequence, 391 residues long: MEQREEKTENIQRKRSRGKSSSSSLPLDLTSEIFSRLPAKSVVRFRCVSKLWSSITTAPYFTNSFETRPNLMFFFKEGDKFFVFTIPQHNQNPNESYSYSSSEIIDSYHTTYPKRCCVTTLTESVHGLICFRKAATPIIWNPTMRKFKPLRKLDERWKNIKVSLGYDPVDGKHKVVCMPYGNAFYECRVLTLGSDQEWRTVKTNHKNSPFTFHGGVCYRQSRCINGVIYYRADTNSGRVILSFDVRSERFDVIELPWDENFGLVMMMSYKGRLACLGFNHEKNSRSMWVLENVEQREWSCHTYLPISHYEPGLENYFNLTGITNDGELIYVPNTVLERFHVIYFDAIRETFRRVIYKGVADKGFRLRNGLEDKPIRRLHFFPNHIETLMSL.

The span at 1-12 (MEQREEKTENIQ) shows a compositional bias: basic and acidic residues. Residues 1-25 (MEQREEKTENIQRKRSRGKSSSSSL) are disordered. The F-box domain maps to 19-68 (KSSSSSLPLDLTSEIFSRLPAKSVVRFRCVSKLWSSITTAPYFTNSFETR).

This is Putative F-box protein At1g47730 from Arabidopsis thaliana (Mouse-ear cress).